Consider the following 119-residue polypeptide: Small ribosomal subunit protein uS13 (119 aa).

Positions 96–119 (PVRGQRTKTNARTRKGPRKLIKSR) are disordered.

Belongs to the universal ribosomal protein uS13 family. Part of the 30S ribosomal subunit. Forms a loose heterodimer with protein S19. Forms two bridges to the 50S subunit in the 70S ribosome.

Its function is as follows. Located at the top of the head of the 30S subunit, it contacts several helices of the 16S rRNA. In the 70S ribosome it contacts the 23S rRNA (bridge B1a) and protein L5 of the 50S subunit (bridge B1b), connecting the 2 subunits; these bridges are implicated in subunit movement. Contacts the tRNAs in the A and P-sites. The protein is Small ribosomal subunit protein uS13 of Buchnera aphidicola subsp. Cinara cedri (strain Cc).